Reading from the N-terminus, the 244-residue chain is tRNA (guanine-N(7)-)-methyltransferase (244 aa).

S-adenosyl-L-methionine is bound by residues Glu-75, Glu-100, Asp-127, and Asp-150. Asp-150 is a catalytic residue. Substrate is bound by residues Lys-154, Asp-186, and 223–226; that span reads TRFE.

It belongs to the class I-like SAM-binding methyltransferase superfamily. TrmB family.

The catalysed reaction is guanosine(46) in tRNA + S-adenosyl-L-methionine = N(7)-methylguanosine(46) in tRNA + S-adenosyl-L-homocysteine. It functions in the pathway tRNA modification; N(7)-methylguanine-tRNA biosynthesis. Catalyzes the formation of N(7)-methylguanine at position 46 (m7G46) in tRNA. The sequence is that of tRNA (guanine-N(7)-)-methyltransferase from Xylella fastidiosa (strain M12).